The primary structure comprises 715 residues: Fatty acid oxidation complex subunit alpha (715 aa).

Residues 1-189 (MIYQGETLSV…KVGAIDAVVA (189 aa)) are enoyl-CoA hydratase/isomerase. Asp-296 lines the substrate pocket. Positions 311–715 (AKATRHAAVL…EMAAQGKTFY (405 aa)) are 3-hydroxyacyl-CoA dehydrogenase. Residues Met-325, Asp-344, 401-403 (VVE), Lys-408, and Ser-430 contribute to the NAD(+) site. The active-site For 3-hydroxyacyl-CoA dehydrogenase activity is the His-451. Asn-454 serves as a coordination point for NAD(+). Substrate contacts are provided by Asn-501 and Tyr-661.

It in the N-terminal section; belongs to the enoyl-CoA hydratase/isomerase family. This sequence in the C-terminal section; belongs to the 3-hydroxyacyl-CoA dehydrogenase family. As to quaternary structure, heterotetramer of two alpha chains (FadB) and two beta chains (FadA).

It catalyses the reaction a (3S)-3-hydroxyacyl-CoA + NAD(+) = a 3-oxoacyl-CoA + NADH + H(+). The enzyme catalyses a (3S)-3-hydroxyacyl-CoA = a (2E)-enoyl-CoA + H2O. The catalysed reaction is a 4-saturated-(3S)-3-hydroxyacyl-CoA = a (3E)-enoyl-CoA + H2O. It carries out the reaction (3S)-3-hydroxybutanoyl-CoA = (3R)-3-hydroxybutanoyl-CoA. It catalyses the reaction a (3Z)-enoyl-CoA = a 4-saturated (2E)-enoyl-CoA. The enzyme catalyses a (3E)-enoyl-CoA = a 4-saturated (2E)-enoyl-CoA. Its pathway is lipid metabolism; fatty acid beta-oxidation. Its function is as follows. Involved in the aerobic and anaerobic degradation of long-chain fatty acids via beta-oxidation cycle. Catalyzes the formation of 3-oxoacyl-CoA from enoyl-CoA via L-3-hydroxyacyl-CoA. It can also use D-3-hydroxyacyl-CoA and cis-3-enoyl-CoA as substrate. The protein is Fatty acid oxidation complex subunit alpha of Aeromonas salmonicida (strain A449).